We begin with the raw amino-acid sequence, 210 residues long: Na(+)-translocating NADH-quinone reductase subunit D (210 aa).

5 helical membrane-spanning segments follow: residues 42-62, 72-92, 103-123, 131-151, and 178-198; these read FVMT…VSLI, IIVQ…VLKA, VFVG…AFAM, LIDG…VGFF, and NGLM…IWVI.

The protein belongs to the NqrDE/RnfAE family. Composed of six subunits; NqrA, NqrB, NqrC, NqrD, NqrE and NqrF.

The protein resides in the cell inner membrane. It catalyses the reaction a ubiquinone + n Na(+)(in) + NADH + H(+) = a ubiquinol + n Na(+)(out) + NAD(+). In terms of biological role, NQR complex catalyzes the reduction of ubiquinone-1 to ubiquinol by two successive reactions, coupled with the transport of Na(+) ions from the cytoplasm to the periplasm. NqrA to NqrE are probably involved in the second step, the conversion of ubisemiquinone to ubiquinol. The chain is Na(+)-translocating NADH-quinone reductase subunit D from Vibrio campbellii (strain ATCC BAA-1116).